A 583-amino-acid polypeptide reads, in one-letter code: J protein JJJ2 (583 aa).

The region spanning 11-79 (RTTYYSILGL…KLRYDRDLKI (69 aa)) is the J domain. Residues 215 to 224 (SYSEDPNSCL) show a composition bias toward polar residues. The interval 215-313 (SYSEDPNSCL…SGSHDSNLQS (99 aa)) is disordered. Phosphoserine is present on S229. Positions 240–252 (QQQQQQQQQQQQQ) are enriched in low complexity. The span at 262–281 (SPDEEKKNNKEPKRESRVSP) shows a compositional bias: basic and acidic residues. The span at 298–313 (KTSTFSSGSHDSNLQS) shows a compositional bias: polar residues.

The protein resides in the cytoplasm. The protein localises to the nucleus. The chain is J protein JJJ2 (JJJ2) from Saccharomyces cerevisiae (strain ATCC 204508 / S288c) (Baker's yeast).